The chain runs to 1047 residues: Isoleucine--tRNA ligase (1047 aa).

Positions 52–62 (PTANGMPGAHH) match the 'HIGH' region motif. A 'KMSKS' region motif is present at residues 600-604 (KMSKH). Lys603 contacts ATP.

This sequence belongs to the class-I aminoacyl-tRNA synthetase family. IleS type 2 subfamily. Monomer. Zn(2+) is required as a cofactor.

It is found in the cytoplasm. The enzyme catalyses tRNA(Ile) + L-isoleucine + ATP = L-isoleucyl-tRNA(Ile) + AMP + diphosphate. Catalyzes the attachment of isoleucine to tRNA(Ile). As IleRS can inadvertently accommodate and process structurally similar amino acids such as valine, to avoid such errors it has two additional distinct tRNA(Ile)-dependent editing activities. One activity is designated as 'pretransfer' editing and involves the hydrolysis of activated Val-AMP. The other activity is designated 'posttransfer' editing and involves deacylation of mischarged Val-tRNA(Ile). The sequence is that of Isoleucine--tRNA ligase from Streptomyces coelicolor (strain ATCC BAA-471 / A3(2) / M145).